A 106-amino-acid polypeptide reads, in one-letter code: uncharacterized protein (106 aa).

A signal peptide spans 1-31 (MNNERLMLKGIFLGAAAGAALSLLHKPTRQA). A coiled-coil region spans residues 57-89 (VITKVDEAKKLARTLSKEVDFVNQQVKELKKTT).

This is an uncharacterized protein from Bacillus subtilis (strain 168).